The chain runs to 299 residues: Nucleoporin POM34 (299 aa).

The interval 1–39 (MKIQAGQLGLDDNDVPGPLPDTDSKPSSQSQNDTPMFKL) is disordered. Residues 25–34 (KPSSQSQNDT) are compositionally biased toward polar residues. 2 helical membrane-spanning segments follow: residues 64 to 84 (IMTNVIAFAFWNLLVKFIKFF) and 133 to 153 (LFHLLISLNILFSLWKLLSTV). Ser270 carries the phosphoserine modification. Thr273 bears the Phosphothreonine mark. Phosphoserine is present on residues Ser292 and Ser294.

As to quaternary structure, component of the nuclear pore complex (NPC). NPC constitutes the exclusive means of nucleocytoplasmic transport. NPCs allow the passive diffusion of ions and small molecules and the active, nuclear transport receptor-mediated bidirectional transport of macromolecules such as proteins, RNAs, ribonucleoparticles (RNPs), and ribosomal subunits across the nuclear envelope. Due to its 8-fold rotational symmetry, all subunits are present with 8 copies or multiples thereof.

The protein resides in the nucleus. It localises to the nuclear pore complex. It is found in the nucleus membrane. Functions as a component of the nuclear pore complex (NPC). NPC components, collectively referred to as nucleoporins (NUPs), can play the role of both NPC structural components and of docking or interaction partners for transiently associated nuclear transport factors. This Saccharomyces cerevisiae (strain ATCC 204508 / S288c) (Baker's yeast) protein is Nucleoporin POM34 (POM34).